Consider the following 358-residue polypeptide: Aromatic amino acid aminotransferase (358 aa).

Lysine 214 is subject to N6-(pyridoxal phosphate)lysine.

This sequence belongs to the class-II pyridoxal-phosphate-dependent aminotransferase family. In terms of assembly, homodimer. The cofactor is pyridoxal 5'-phosphate.

It carries out the reaction an aromatic L-alpha-amino acid + 2-oxoglutarate = an aromatic oxo-acid + L-glutamate. Its function is as follows. Aminotransferase that catalyzes the conversion of aromatic amino acids and 2-oxoglutarate into corresponding aromatic oxo acids and L-glutamate. The sequence is that of Aromatic amino acid aminotransferase from Rhodococcus jostii (strain RHA1).